The sequence spans 303 residues: Type II methyltransferase M.MjaI (303 aa).

It belongs to the N(4)/N(6)-methyltransferase family. N(4) subfamily.

The catalysed reaction is a 2'-deoxycytidine in DNA + S-adenosyl-L-methionine = an N(4)-methyl-2'-deoxycytidine in DNA + S-adenosyl-L-homocysteine + H(+). In terms of biological role, a beta subtype methylase that recognizes the double-stranded sequence 5'-CTAG-3', methylates C-1 on both strands, and protects the DNA from cleavage by the MjaI endonuclease. This chain is Type II methyltransferase M.MjaI (mjaIM), found in Methanocaldococcus jannaschii (strain ATCC 43067 / DSM 2661 / JAL-1 / JCM 10045 / NBRC 100440) (Methanococcus jannaschii).